The chain runs to 281 residues: Protease HtpX homolog (281 aa).

The next 2 membrane-spanning stretches (helical) occupy residues Val-6–Gly-26 and Ser-28–Ser-48. His-130 serves as a coordination point for Zn(2+). Residue Glu-131 is part of the active site. His-134 serves as a coordination point for Zn(2+). 2 helical membrane passes run Val-140–Val-160 and Ile-181–Ile-201. Glu-206 is a Zn(2+) binding site.

This sequence belongs to the peptidase M48B family. Zn(2+) serves as cofactor.

The protein localises to the cell membrane. The protein is Protease HtpX homolog of Pelotomaculum thermopropionicum (strain DSM 13744 / JCM 10971 / SI).